A 205-amino-acid polypeptide reads, in one-letter code: Small ribosomal subunit protein uS4 (205 aa).

The segment covering 1–12 (MSKRVQAKHKLD) has biased composition (basic residues). A disordered region spans residues 1-49 (MSKRVQAKHKLDRRMGQNIWGRPKSPVNRREYGPGQHGQRRKGKMSDFG). The S4 RNA-binding domain occupies 94 to 155 (RRLDAVVYRS…ASRQLEIVVV (62 aa)).

The protein belongs to the universal ribosomal protein uS4 family. As to quaternary structure, part of the 30S ribosomal subunit. Contacts protein S5. The interaction surface between S4 and S5 is involved in control of translational fidelity.

In terms of biological role, one of the primary rRNA binding proteins, it binds directly to 16S rRNA where it nucleates assembly of the body of the 30S subunit. Its function is as follows. With S5 and S12 plays an important role in translational accuracy. In Methylorubrum populi (strain ATCC BAA-705 / NCIMB 13946 / BJ001) (Methylobacterium populi), this protein is Small ribosomal subunit protein uS4.